We begin with the raw amino-acid sequence, 31 residues long: Delta-actitoxin-Dar1b (31 aa).

This sequence belongs to the sea anemone short toxin (type III) family. Post-translationally, contains 4 disulfide bonds.

It is found in the secreted. The protein localises to the nematocyst. In terms of biological role, binds specifically to voltage-gated sodium channels (Nav), thereby delaying their inactivation during signal transduction. The polypeptide is Delta-actitoxin-Dar1b (Dofleinia armata (Armed anemone)).